The sequence spans 553 residues: Glucose-6-phosphate isomerase (553 aa).

Glu357 serves as the catalytic Proton donor. Active-site residues include His388 and Lys514. Positions 524 to 553 are disordered; the sequence is ITGAGSPPPQSDSSTDGLVRRYRTERGRAG. Residues 541 to 553 are compositionally biased toward basic and acidic residues; the sequence is LVRRYRTERGRAG.

The protein belongs to the GPI family.

Its subcellular location is the cytoplasm. The enzyme catalyses alpha-D-glucose 6-phosphate = beta-D-fructose 6-phosphate. Its pathway is carbohydrate biosynthesis; gluconeogenesis. It functions in the pathway carbohydrate degradation; glycolysis; D-glyceraldehyde 3-phosphate and glycerone phosphate from D-glucose: step 2/4. Catalyzes the reversible isomerization of glucose-6-phosphate to fructose-6-phosphate. This Mycobacterium bovis (strain BCG / Tokyo 172 / ATCC 35737 / TMC 1019) protein is Glucose-6-phosphate isomerase.